Here is a 407-residue protein sequence, read N- to C-terminus: Accessory Sec system protein translocase subunit SecY2 (407 aa).

Transmembrane regions (helical) follow at residues 22-42 (IAFTILILLIYILGSKITIVD), 68-88 (LNVFSLGLGPWLTAMIIISLI), 108-128 (EKFLTLGLSIIQGYFVINQFV), 136-156 (FTELLLLLILVTGAMLMMWLA), 169-189 (PIVLLSVIKSMFTQSLPIVSI), 191-211 (ILMLVVMVILIIVALFILLLT), 245-265 (ISIMISLSVFLLLTSTINLIF), 280-300 (FGHYMGVTIYLILQTVLGYLL), 343-363 (WFGTTIVTAIIGVPLYISLLV), and 366-386 (LSEYIYFAVQLMIMVYLAMNI).

The protein belongs to the SecY/SEC61-alpha family. SecY2 subfamily. In terms of assembly, component of the accessory SecA2/SecY2 protein translocase complex required to export cell wall proteins. May form heterotrimers with SecE and SecG subunits.

It localises to the cell membrane. Functionally, part of the accessory SecA2/SecY2 system specifically required for export of possible cell wall proteins. The central subunit of a protein translocation channel. The polypeptide is Accessory Sec system protein translocase subunit SecY2 (Staphylococcus pseudintermedius (strain ED99)).